A 519-amino-acid polypeptide reads, in one-letter code: Glucose-1-phosphate adenylyltransferase large subunit 3, chloroplastic/amyloplastic (519 aa).

A chloroplast-targeting transit peptide spans 1-74 (MQFSSVFPLE…DAGPDTLHVR (74 aa)).

The protein belongs to the bacterial/plant glucose-1-phosphate adenylyltransferase family. As to quaternary structure, heterotetramer composed of two small and two large subunits. In terms of tissue distribution, expressed in stems.

The protein resides in the plastid. Its subcellular location is the chloroplast. It catalyses the reaction alpha-D-glucose 1-phosphate + ATP + H(+) = ADP-alpha-D-glucose + diphosphate. It functions in the pathway glycan biosynthesis; starch biosynthesis. With respect to regulation, activated by 3'phosphoglycerate, inhibited by orthophosphate. Allosteric regulation. Functionally, involved in synthesis of starch. Catalyzes the synthesis of ADP-glucose, a molecule that serves as an activated glycosyl donor for alpha-1,4-glucan synthesis. Essential for starch synthesis in leaf chloroplasts. This is Glucose-1-phosphate adenylyltransferase large subunit 3, chloroplastic/amyloplastic from Oryza sativa subsp. japonica (Rice).